Consider the following 229-residue polypeptide: Large ribosomal subunit protein uL1 (229 aa).

It belongs to the universal ribosomal protein uL1 family. In terms of assembly, part of the 50S ribosomal subunit.

Binds directly to 23S rRNA. The L1 stalk is quite mobile in the ribosome, and is involved in E site tRNA release. In terms of biological role, protein L1 is also a translational repressor protein, it controls the translation of the L11 operon by binding to its mRNA. This chain is Large ribosomal subunit protein uL1, found in Pediococcus pentosaceus (strain ATCC 25745 / CCUG 21536 / LMG 10740 / 183-1w).